Consider the following 114-residue polypeptide: Vacuolar ATPase assembly integral membrane protein VMA21 (114 aa).

At 1-39 (MATRRIISQEKTLLEKDDSIGSSPAADEKSNIAPAVPTS) the chain is on the cytoplasmic side. Residues 40 to 60 (VIMKLLAFTLGMIVIPIGSYF) form a helical membrane-spanning segment. The Lumenal portion of the chain corresponds to 61 to 73 (ATVDSVFNGNSTY). The chain crosses the membrane as a helical span at residues 74 to 94 (AGALAAIMANVVLIGYIFVAM). The Cytoplasmic portion of the chain corresponds to 95-114 (AEDQSDQQEGGGPGDGKKDR). Residues 111–114 (KKDR) carry the Prevents secretion from ER motif.

This sequence belongs to the VMA21 family.

It is found in the endoplasmic reticulum membrane. The protein localises to the endoplasmic reticulum-Golgi intermediate compartment membrane. Its subcellular location is the cytoplasmic vesicle. The protein resides in the COPII-coated vesicle membrane. Required for the assembly of the V0 complex of the vacuolar ATPase (V-ATPase) in the endoplasmic reticulum. This chain is Vacuolar ATPase assembly integral membrane protein VMA21, found in Chaetomium globosum (strain ATCC 6205 / CBS 148.51 / DSM 1962 / NBRC 6347 / NRRL 1970) (Soil fungus).